Here is a 233-residue protein sequence, read N- to C-terminus: Translation initiation factor IF-3 (233 aa).

Disordered stretches follow at residues Met1–Arg21 and Leu184–Arg233. Residues Ala193–Pro211 are compositionally biased toward low complexity. The segment covering Ala212–Ala223 has biased composition (pro residues). A compositionally biased stretch (low complexity) spans Pro224–Arg233.

Belongs to the IF-3 family. In terms of assembly, monomer.

The protein localises to the cytoplasm. Its function is as follows. IF-3 binds to the 30S ribosomal subunit and shifts the equilibrium between 70S ribosomes and their 50S and 30S subunits in favor of the free subunits, thus enhancing the availability of 30S subunits on which protein synthesis initiation begins. The polypeptide is Translation initiation factor IF-3 (Anaeromyxobacter dehalogenans (strain 2CP-C)).